The chain runs to 451 residues: Phosphoglucosamine mutase (451 aa).

The Phosphoserine intermediate role is filled by Ser-102. Mg(2+) contacts are provided by Ser-102, Asp-242, Asp-244, and Asp-246. Ser-102 carries the phosphoserine modification.

This sequence belongs to the phosphohexose mutase family. Mg(2+) is required as a cofactor. Post-translationally, activated by phosphorylation.

It catalyses the reaction alpha-D-glucosamine 1-phosphate = D-glucosamine 6-phosphate. Its function is as follows. Catalyzes the conversion of glucosamine-6-phosphate to glucosamine-1-phosphate. This chain is Phosphoglucosamine mutase, found in Staphylococcus aureus (strain USA300).